A 72-amino-acid polypeptide reads, in one-letter code: Translation initiation factor IF-1 (72 aa).

One can recognise an S1-like domain in the interval 1-72 (MAKQDVIELE…TRGRITYRYK (72 aa)).

It belongs to the IF-1 family. Component of the 30S ribosomal translation pre-initiation complex which assembles on the 30S ribosome in the order IF-2 and IF-3, IF-1 and N-formylmethionyl-tRNA(fMet); mRNA recruitment can occur at any time during PIC assembly.

It localises to the cytoplasm. Functionally, one of the essential components for the initiation of protein synthesis. Stabilizes the binding of IF-2 and IF-3 on the 30S subunit to which N-formylmethionyl-tRNA(fMet) subsequently binds. Helps modulate mRNA selection, yielding the 30S pre-initiation complex (PIC). Upon addition of the 50S ribosomal subunit IF-1, IF-2 and IF-3 are released leaving the mature 70S translation initiation complex. The polypeptide is Translation initiation factor IF-1 (Staphylococcus aureus (strain USA300 / TCH1516)).